The following is a 338-amino-acid chain: Ferrochelatase (338 aa).

Positions 189 and 293 each coordinate Fe cation.

It belongs to the ferrochelatase family.

It is found in the cytoplasm. The catalysed reaction is heme b + 2 H(+) = protoporphyrin IX + Fe(2+). It functions in the pathway porphyrin-containing compound metabolism; protoheme biosynthesis; protoheme from protoporphyrin-IX: step 1/1. In terms of biological role, catalyzes the ferrous insertion into protoporphyrin IX. This Azotobacter vinelandii (strain DJ / ATCC BAA-1303) protein is Ferrochelatase.